The primary structure comprises 103 residues: N(4)-acetylcytidine amidohydrolase (103 aa).

The ASCH domain occupies 6-101 (ITFFQRFQDD…QTQFYVIEFK (96 aa)). The active-site Proton acceptor is the lysine 21. Catalysis depends on threonine 24, which acts as the Nucleophile. The active-site Proton donor is the glutamate 74.

It belongs to the N(4)-acetylcytidine amidohydrolase family.

The enzyme catalyses N(4)-acetylcytidine + H2O = cytidine + acetate + H(+). It carries out the reaction N(4)-acetyl-2'-deoxycytidine + H2O = 2'-deoxycytidine + acetate + H(+). It catalyses the reaction N(4)-acetylcytosine + H2O = cytosine + acetate + H(+). Functionally, catalyzes the hydrolysis of N(4)-acetylcytidine (ac4C). The polypeptide is N(4)-acetylcytidine amidohydrolase (yqfB) (Escherichia coli O81 (strain ED1a)).